The following is a 261-amino-acid chain: Carnitinyl-CoA dehydratase (261 aa).

Glu111 (nucleophile) is an active-site residue. Catalysis depends on Glu131, which acts as the Proton acceptor.

The protein belongs to the enoyl-CoA hydratase/isomerase family.

It catalyses the reaction (R)-carnitinyl-CoA = crotonobetainyl-CoA + H2O. It functions in the pathway amine and polyamine metabolism; carnitine metabolism. Functionally, catalyzes the reversible dehydration of L-carnitinyl-CoA to crotonobetainyl-CoA. This is Carnitinyl-CoA dehydratase from Salmonella arizonae (strain ATCC BAA-731 / CDC346-86 / RSK2980).